A 209-amino-acid polypeptide reads, in one-letter code: Uracil phosphoribosyltransferase (209 aa).

Residues Arg-79, Arg-104, and 131-139 (DPMLATGNS) each bind 5-phospho-alpha-D-ribose 1-diphosphate. Residues Ile-194 and 199–201 (GDA) contribute to the uracil site. Residue Asp-200 participates in 5-phospho-alpha-D-ribose 1-diphosphate binding.

This sequence belongs to the UPRTase family. Requires Mg(2+) as cofactor.

The enzyme catalyses UMP + diphosphate = 5-phospho-alpha-D-ribose 1-diphosphate + uracil. Its pathway is pyrimidine metabolism; UMP biosynthesis via salvage pathway; UMP from uracil: step 1/1. Its activity is regulated as follows. Allosterically activated by GTP. Its function is as follows. Catalyzes the conversion of uracil and 5-phospho-alpha-D-ribose 1-diphosphate (PRPP) to UMP and diphosphate. This is Uracil phosphoribosyltransferase from Acidovorax sp. (strain JS42).